A 353-amino-acid polypeptide reads, in one-letter code: Uroporphyrinogen decarboxylase (353 aa).

Residues 33 to 37 (RQAGR), Asp-82, Tyr-158, Ser-213, and His-332 contribute to the substrate site.

The protein belongs to the uroporphyrinogen decarboxylase family. Homodimer.

Its subcellular location is the cytoplasm. The enzyme catalyses uroporphyrinogen III + 4 H(+) = coproporphyrinogen III + 4 CO2. It functions in the pathway porphyrin-containing compound metabolism; protoporphyrin-IX biosynthesis; coproporphyrinogen-III from 5-aminolevulinate: step 4/4. Catalyzes the decarboxylation of four acetate groups of uroporphyrinogen-III to yield coproporphyrinogen-III. The chain is Uroporphyrinogen decarboxylase from Gluconobacter oxydans (strain 621H) (Gluconobacter suboxydans).